The following is a 247-amino-acid chain: MPITSTTPEPGIVAVTVDYPPVNAIPSKAWFDLADAVTAAGANSDTRAVILRAEGRGFNAGVDIKEMQRTEGFTALIDANRGCFAAFRAVYECAVPVIAAVNGFCVGGGIGLVGNSDVIVASEDATFGLPEVERGALGAATHLSRLVPQHLMRRLFFTAATVDAATLQHFGSVHEVVSRDQLDEAALRVARDIAAKDTRVIRAAKEALNFIDVQRVNASYRMEQGFTFELNLAGVADEHRDAFVKKS.

Belongs to the enoyl-CoA hydratase/isomerase family.

It carries out the reaction (7aS)-7a-methyl-1,5-dioxo-2,3,5,6,7,7a-hexahydro-1H-indene-carboxyl-CoA + H2O = (3E)-2-(2-carboxylatoethyl)-3-methyl-6-oxocyclohex-1-ene-1-carboxyl-CoA + H(+). Its pathway is steroid metabolism; cholesterol degradation. Its function is as follows. Involved in the final steps of cholesterol and steroid degradation. Catalyzes the hydrolytic ring D opening of (7aS)-7a-methyl-1,5-dioxo-2,3,5,6,7,7a-hexahydro-1H-indene-carboxyl-CoA (HIEC-CoA) to (3E)-2-(2-carboxylatoethyl)-3-methyl-6-oxocyclohex-1-ene-1-carboxyl-CoA (COCHEA-CoA). The sequence is that of (7aS)-7a-methyl-1,5-dioxo-2,3,5,6,7,7a-hexahydro-1H-indene-carboxyl-CoA hydrolase from Mycobacterium tuberculosis (strain ATCC 25618 / H37Rv).